Reading from the N-terminus, the 393-residue chain is Elongation factor Tu (393 aa).

Residues 10–203 (KPHVNIGTIG…AVDDYIPEPV (194 aa)) enclose the tr-type G domain. The G1 stretch occupies residues 19–26 (GHVDHGKT). 19–26 (GHVDHGKT) contacts GTP. Mg(2+) is bound at residue Thr26. Residues 60-64 (GITIS) are G2. Residues 81 to 84 (DCPG) form a G3 region. GTP-binding positions include 81–85 (DCPGH) and 136–139 (NKVD). The segment at 136–139 (NKVD) is G4. The interval 173-175 (SAL) is G5.

The protein belongs to the TRAFAC class translation factor GTPase superfamily. Classic translation factor GTPase family. EF-Tu/EF-1A subfamily. Monomer.

It is found in the cytoplasm. It carries out the reaction GTP + H2O = GDP + phosphate + H(+). Its function is as follows. GTP hydrolase that promotes the GTP-dependent binding of aminoacyl-tRNA to the A-site of ribosomes during protein biosynthesis. This is Elongation factor Tu from Chlorobium phaeobacteroides (strain BS1).